Reading from the N-terminus, the 475-residue chain is Argininosuccinate lyase (475 aa).

This sequence belongs to the lyase 1 family. Argininosuccinate lyase subfamily.

The protein localises to the cytoplasm. It carries out the reaction 2-(N(omega)-L-arginino)succinate = fumarate + L-arginine. The protein operates within amino-acid biosynthesis; L-arginine biosynthesis; L-arginine from L-ornithine and carbamoyl phosphate: step 3/3. This chain is Argininosuccinate lyase, found in Streptomyces griseus subsp. griseus (strain JCM 4626 / CBS 651.72 / NBRC 13350 / KCC S-0626 / ISP 5235).